A 902-amino-acid polypeptide reads, in one-letter code: 26S proteasome regulatory subunit rpn-1 (902 aa).

Residues 1–41 are compositionally biased toward basic and acidic residues; the sequence is MAQESDLSKTADKGKGKAVDDEKKHQDVDGKTPANGKKEEE. A disordered region spans residues 1–54; sequence MAQESDLSKTADKGKGKAVDDEKKHQDVDGKTPANGKKEEEQNASEELSEEDQQ. A compositionally biased stretch (acidic residues) spans 42–52; sequence QNASEELSEED. PC repeat units lie at residues 415 to 448, 449 to 487, 488 to 522, 525 to 559, 568 to 601, 645 to 680, 681 to 715, and 716 to 750; these read STVASLGTLLLWDVENGLDHVDKYTYLEEEQIQA, GAYLAIGIMNTNVRTDSEPAMALLADPDKLAHKNPLIRV, ATIMGLGLAYAGSCKEELLSFLVNIISDPEESMQV, MAALACGMIFVGSSNSEVSEAIVTTLLDEESGSRL, ALGLGLLYFGRQEQVDVILETLKAVEHPMAKPTA, AVLGIGLIAMGEDVGQEMVLRHFGHLMHYGEANIRR, AVPLAMGLISPSNPQMKVYDTLSRYSHDNDNEVAI, and NAIFAMGLLGAGTNNARLAQLLRQLASYYHRDQES.

This sequence belongs to the proteasome subunit S2 family.

Functionally, acts as a regulatory subunit of the 26 proteasome which is involved in the ATP-dependent degradation of ubiquitinated proteins. This chain is 26S proteasome regulatory subunit rpn-1 (rpn-1), found in Neurospora crassa (strain ATCC 24698 / 74-OR23-1A / CBS 708.71 / DSM 1257 / FGSC 987).